A 309-amino-acid chain; its full sequence is Protein EXORDIUM-like 1 (309 aa).

The first 23 residues, 1–23 (MASFVMGYFLLFAVAFMCLDART), serve as a signal peptide directing secretion.

Belongs to the EXORDIUM family.

It is found in the secreted. Its subcellular location is the extracellular space. The protein resides in the apoplast. Functionally, may play a role in a brassinosteroid-dependent regulatory pathway that controls growth and development under low carbon and energy availability. The chain is Protein EXORDIUM-like 1 (EXL1) from Arabidopsis thaliana (Mouse-ear cress).